A 746-amino-acid polypeptide reads, in one-letter code: Zinc finger protein 366 (746 aa).

Positions Met-1 to Leu-64 are disordered. C2H2-type zinc fingers lie at residues Trp-250 to His-272, His-278 to His-300, His-306 to His-328, His-334 to His-356, Asn-362 to His-384, Tyr-390 to His-412, Tyr-418 to His-440, His-446 to His-468, Tyr-474 to His-496, Phe-502 to His-524, and Phe-530 to His-553. Residues Gly-452 to Ile-746 form an interaction with NRIP1 region. The PXDLS motif lies at Pro-587–Ser-591. Residues Pro-587–Glu-689 form a disordered region. The segment covering Cys-613 to Tyr-627 has biased composition (acidic residues). A compositionally biased stretch (basic and acidic residues) spans Glu-675–Glu-689.

Interacts with ESR1 and NRIP1. Interacts (via PXDLS motif) with CTBP1. In terms of tissue distribution, expressed in immature and mature dendritic cells (DCs).

The protein resides in the nucleus. Has transcriptional repression activity. Acts as a corepressor of ESR1; the function seems to involve CTBP1 and histone deacetylases. In Mus musculus (Mouse), this protein is Zinc finger protein 366.